The sequence spans 188 residues: dTTP/UTP pyrophosphatase (188 aa).

Catalysis depends on D67, which acts as the Proton acceptor.

Belongs to the Maf family. YhdE subfamily. A divalent metal cation is required as a cofactor.

The protein localises to the cytoplasm. It carries out the reaction dTTP + H2O = dTMP + diphosphate + H(+). The catalysed reaction is UTP + H2O = UMP + diphosphate + H(+). Its function is as follows. Nucleoside triphosphate pyrophosphatase that hydrolyzes dTTP and UTP. May have a dual role in cell division arrest and in preventing the incorporation of modified nucleotides into cellular nucleic acids. This Roseobacter denitrificans (strain ATCC 33942 / OCh 114) (Erythrobacter sp. (strain OCh 114)) protein is dTTP/UTP pyrophosphatase.